The chain runs to 805 residues: Cell division cycle protein 48 homolog (805 aa).

Residues 249 to 256 and 522 to 529 contribute to the ATP site; these read GPPGSGKT and GPPGCGKT. The disordered stretch occupies residues 783-805; sequence GATAAADPFATSNAAADDDDLYS.

Belongs to the AAA ATPase family.

Probably functions in cell division and growth processes. The chain is Cell division cycle protein 48 homolog (CAFP) from Capsicum annuum (Capsicum pepper).